Reading from the N-terminus, the 504-residue chain is Glutamate--tRNA ligase (504 aa).

The short motif at Pro-14–Gly-24 is the 'HIGH' region element. The short motif at Lys-261–Arg-265 is the 'KMSKS' region element. Lys-264 serves as a coordination point for ATP.

It belongs to the class-I aminoacyl-tRNA synthetase family. Glutamate--tRNA ligase type 1 subfamily. In terms of assembly, monomer.

It is found in the cytoplasm. It catalyses the reaction tRNA(Glu) + L-glutamate + ATP = L-glutamyl-tRNA(Glu) + AMP + diphosphate. Its function is as follows. Catalyzes the attachment of glutamate to tRNA(Glu) in a two-step reaction: glutamate is first activated by ATP to form Glu-AMP and then transferred to the acceptor end of tRNA(Glu). This chain is Glutamate--tRNA ligase, found in Chlorobium luteolum (strain DSM 273 / BCRC 81028 / 2530) (Pelodictyon luteolum).